We begin with the raw amino-acid sequence, 344 residues long: Ferrochelatase (344 aa).

Fe cation-binding residues include His-214 and Glu-295.

The protein belongs to the ferrochelatase family.

The protein localises to the cytoplasm. The catalysed reaction is heme b + 2 H(+) = protoporphyrin IX + Fe(2+). Its pathway is porphyrin-containing compound metabolism; protoheme biosynthesis; protoheme from protoporphyrin-IX: step 1/1. Catalyzes the ferrous insertion into protoporphyrin IX. In Rhizobium leguminosarum bv. trifolii (strain WSM2304), this protein is Ferrochelatase.